The following is a 488-amino-acid chain: Pup--protein ligase (488 aa).

Glu-34 contacts Mg(2+). Arg-77 is a binding site for ATP. Residue Tyr-79 coordinates Mg(2+). Asp-81 (proton acceptor) is an active-site residue. Residue Glu-87 coordinates Mg(2+). Residues Thr-90 and Trp-453 each coordinate ATP.

This sequence belongs to the Pup ligase/Pup deamidase family. Pup-conjugating enzyme subfamily.

The enzyme catalyses ATP + [prokaryotic ubiquitin-like protein]-L-glutamate + [protein]-L-lysine = ADP + phosphate + N(6)-([prokaryotic ubiquitin-like protein]-gamma-L-glutamyl)-[protein]-L-lysine.. Its pathway is protein degradation; proteasomal Pup-dependent pathway. It participates in protein modification; protein pupylation. Its function is as follows. Catalyzes the covalent attachment of the prokaryotic ubiquitin-like protein modifier Pup to the proteasomal substrate proteins, thereby targeting them for proteasomal degradation. This tagging system is termed pupylation. The ligation reaction involves the side-chain carboxylate of the C-terminal glutamate of Pup and the side-chain amino group of a substrate lysine. This is Pup--protein ligase from Bifidobacterium dentium (strain ATCC 27534 / DSM 20436 / JCM 1195 / Bd1).